Consider the following 366-residue polypeptide: Alanine racemase (366 aa).

The active-site Proton acceptor; specific for D-alanine is the Lys40. Lys40 carries the post-translational modification N6-(pyridoxal phosphate)lysine. Arg136 lines the substrate pocket. The active-site Proton acceptor; specific for L-alanine is the Tyr263. A substrate-binding site is contributed by Met310.

It belongs to the alanine racemase family. The cofactor is pyridoxal 5'-phosphate.

It carries out the reaction L-alanine = D-alanine. Its pathway is amino-acid biosynthesis; D-alanine biosynthesis; D-alanine from L-alanine: step 1/1. Functionally, catalyzes the interconversion of L-alanine and D-alanine. May also act on other amino acids. This chain is Alanine racemase (alr), found in Streptococcus pyogenes serotype M2 (strain MGAS10270).